Here is a 502-residue protein sequence, read N- to C-terminus: Arginine-specific demethylase JMJ22 (502 aa).

Positions 15–45 are disordered; it reads KSKSKRLKLHQHEPESLFPEKEVEEEDEDEG. The segment covering 24–35 has biased composition (basic and acidic residues); that stretch reads HQHEPESLFPEK. One can recognise an F-box domain in the interval 80-126; sequence LGNLQILSDELVLDILGLLGANHLGVLATVTKSFYIFANHEPLWRNL. Positions 279–439 constitute a JmjC domain; it reads EKVPVLDSEY…NVLEFLKKPN (161 aa). Fe cation-binding residues include H324, D326, and H407.

The protein belongs to the JARID1 histone demethylase family. The cofactor is Fe(2+). As to expression, expressed in inflorescences, roots and siliques, and, at low levels, in leaves and stems.

Its subcellular location is the nucleus. The enzyme catalyses N(omega),N(omega)-dimethyl-L-arginyl-[protein] + 2-oxoglutarate + O2 = N(omega)-methyl-L-arginyl-[protein] + formaldehyde + succinate + CO2. In terms of biological role, histone demethylase that demethylates 'Arg-3' (H4R3me) of histone H4 with a specific activity for H4R3me2. Involved in the positive regulation of gene expression. Together with JMJ20, positively regulates seed germination by promoting the removal of repressive histone arginine methylations (e.g. H4R3me2) at GA3ox1 and GA3ox2 to trigger gibberellic acid (GA) biosynthesis. The sequence is that of Arginine-specific demethylase JMJ22 from Arabidopsis thaliana (Mouse-ear cress).